Here is a 426-residue protein sequence, read N- to C-terminus: Dihydroorotase (426 aa).

The Zn(2+) site is built by histidine 58 and histidine 60. Residues 60-62 (HLR) and asparagine 92 contribute to the substrate site. Aspartate 150, histidine 177, and histidine 230 together coordinate Zn(2+). Residue asparagine 276 coordinates substrate. Aspartate 303 is a binding site for Zn(2+). Residue aspartate 303 is part of the active site. Residues histidine 307 and 321-322 (FG) each bind substrate.

It belongs to the metallo-dependent hydrolases superfamily. DHOase family. Class I DHOase subfamily. Zn(2+) is required as a cofactor.

The catalysed reaction is (S)-dihydroorotate + H2O = N-carbamoyl-L-aspartate + H(+). The protein operates within pyrimidine metabolism; UMP biosynthesis via de novo pathway; (S)-dihydroorotate from bicarbonate: step 3/3. Functionally, catalyzes the reversible cyclization of carbamoyl aspartate to dihydroorotate. The chain is Dihydroorotase from Listeria monocytogenes serovar 1/2a (strain ATCC BAA-679 / EGD-e).